Consider the following 263-residue polypeptide: Polyglutamine-binding protein 1 (263 aa).

Positions 46 to 80 (EGLPPSWYKVFDPSCGLPYYWNVETDLVSWLSPHD) constitute a WW domain. Positions 94–263 (NSNADAEDKS…AEASRSKQQD (170 aa)) are disordered. The segment covering 99–173 (AEDKSERNLE…DKADREDGKD (75 aa)) has biased composition (basic and acidic residues). Residues 104–110 (ERNLEKV) form a 1-1; approximate repeat. The 5 X 7 AA approximate tandem repeats of D-R-[NS]-H-E-K-S stretch occupies residues 104–138 (ERNLEKVDRNHEKSDRSHEKPDRSHEKADRNHEKS). One copy of the 1-2 repeat lies at 111–117 (DRNHEKS). One copy of the 1-3; approximate repeat lies at 118 to 124 (DRSHEKP). The 1-4; approximate repeat unit spans residues 125 to 131 (DRSHEKA). 10 repeat units span residues 132–138 (DRNHEKS), 139–140 (DR), 141–142 (ER), 143–144 (ER), 150–151 (DR), 152–153 (ER), 154–155 (DR), 156–157 (DR), 158–159 (ER), and 160–161 (ER). The tract at residues 139 to 144 (DRERER) is 3 X 2 AA tandem repeats of [DE]-R. The 6 X 2 AA tandem repeats of [DE]-R stretch occupies residues 150 to 161 (DRERDRDRERER). Residues 243 to 253 (YPSPGAVLRAN) form an important for interaction with TXNL4A region. Ser-245 is modified (phosphoserine).

In terms of assembly, interacts with POU3F2/Brn-2, ATXN1, TXNL4A, HTT and AR. Interaction with ATXN1 correlates positively with the length of the polyglutamine tract. Interacts with RNA polymerase II large subunit in a phosphorylation-dependent manner. Forms a ternary complex with ATXN1 mutant and phosphorylated RNA polymerase II. Interacts (via C-terminus) with TXNL4A and CD2BP2. Interacts (via WW domain) with ATN1 and SF3B1, and may interact with additional splice factors. Interacts (via WW domain) with WBP11; Leading to reduce interaction between PQBP1 and TXNL4A. Interacts with CAPRIN1. Interacts with DDX1. Interacts with SFPQ. Interacts with KHSRP.

It localises to the nucleus. It is found in the nucleus speckle. The protein resides in the cytoplasmic granule. Functionally, intrinsically disordered protein that acts as a scaffold, and which is involved in different processes, such as pre-mRNA splicing, transcription regulation, innate immunity and neuron development. Interacts with splicing-related factors via the intrinsically disordered region and regulates alternative splicing of target pre-mRNA species. May suppress the ability of POU3F2 to transactivate the DRD1 gene in a POU3F2 dependent manner. Can activate transcription directly or via association with the transcription machinery. May be involved in ATXN1 mutant-induced cell death. The interaction with ATXN1 mutant reduces levels of phosphorylated RNA polymerase II large subunit. Involved in the assembly of cytoplasmic stress granule, possibly by participating in the transport of neuronal RNA granules. Also acts as an innate immune sensor of infection by retroviruses, by detecting the presence of reverse-transcribed DNA in the cytosol. Directly binds retroviral reverse-transcribed DNA in the cytosol and interacts with CGAS, leading to activate the cGAS-STING signaling pathway, triggering type-I interferon production. The protein is Polyglutamine-binding protein 1 (Pqbp1) of Rattus norvegicus (Rat).